Consider the following 2033-residue polypeptide: Envoplakin (2033 aa).

Residues 1 to 27 (MFKGLSKGSQGKGSPKGSPAKGSPKGS) are compositionally biased toward low complexity. Disordered stretches follow at residues 1–37 (MFKG…AATQ) and 65–85 (QQDR…ETGR). The tract at residues 1–841 (MFKGLSKGSQ…LEPTLAVSAP (841 aa)) is globular 1. The interval 12–28 (KGSPKGSPAKGSPKGSP) is 4 X 4 AA tandem repeats of K-G-S-P. Positions 71-84 (SEQSQALQHQQETG) are enriched in polar residues. The Spectrin repeat unit spans residues 229 to 330 (YTHLQGCTRQ…LCICQETQLQ (102 aa)). The span at 388 to 401 (TERATGDLQRRSRD) shows a compositional bias: basic and acidic residues. Disordered stretches follow at residues 388-418 (TERA…PLHV) and 891-916 (SEDI…ESEA). The 58-residue stretch at 413 to 470 (QQPLHVDSICDWDSGEVQLLQGERYKLVDNTDPHAWVVQGPGGETKRAPAACFCIPAP) folds into the SH3 domain. A central fibrous rod domain region spans residues 842–1673 (KRPRVAPLQE…AKVSREELSQ (832 aa)). Residues 845–1135 (RVAPLQESIQ…AISSVEPKVI (291 aa)) are a coiled coil. Residues 891 to 902 (SEDIRRTHDAKQ) are compositionally biased toward basic and acidic residues. Residues 1185–1226 (KQRPKVQLQERVHEIFQVDPETEQEITRLKAKLQEMAGKRSG) form a Plectin 1 repeat. Ser1575 carries the post-translational modification Phosphoserine. Over residues 1614–1623 (QEESKLLSQK) the composition is skewed to low complexity. The tract at residues 1614-1636 (QEESKLLSQKTESERQKAAQRGQ) is disordered. The globular 2 stretch occupies residues 1674–2033 (ETQTRETNLS…ASPTVPRSLR (360 aa)). The stretch at 1678-1713 (RETNLSTKISILEPETGKDMSPYEAYKRGIIDRGQY) is one Plectin 2 repeat. Ser1799 is subject to Phosphoserine. Plectin repeat units follow at residues 1818-1855 (LGLG…PITG), 1856-1893 (QKLL…NTST), 1894-1931 (QRLL…RESV), 1932-1969 (LPHL…EELA), and 1970-2007 (QLLQ…PLSG). Ser2025 carries the post-translational modification Phosphoserine.

This sequence belongs to the plakin or cytolinker family. In terms of assembly, may form a homodimer or a heterodimer with PPL. As to expression, exclusively expressed in stratified squamous epithelia.

The protein resides in the cell junction. Its subcellular location is the desmosome. It localises to the cornified envelope. It is found in the cytoplasm. The protein localises to the cytoskeleton. Its function is as follows. Component of the cornified envelope of keratinocytes. May link the cornified envelope to desmosomes and intermediate filaments. The sequence is that of Envoplakin (EVPL) from Homo sapiens (Human).